The primary structure comprises 290 residues: Small ribosomal subunit protein uS2 (290 aa).

The protein belongs to the universal ribosomal protein uS2 family. In terms of assembly, component of the small ribosomal subunit. Mature ribosomes consist of a small (40S) and a large (60S) subunit. The 40S subunit contains about 33 different proteins and 1 molecule of RNA (18S). The 60S subunit contains about 49 different proteins and 3 molecules of RNA (28S, 5.8S and 5S). Interacts with ribosomal protein S21.

It localises to the cytoplasm. Required for the assembly and/or stability of the 40S ribosomal subunit. Required for the processing of the 20S rRNA-precursor to mature 18S rRNA in a late step of the maturation of 40S ribosomal subunits. The polypeptide is Small ribosomal subunit protein uS2 (Culex quinquefasciatus (Southern house mosquito)).